Reading from the N-terminus, the 373-residue chain is Thyroid hormone receptor beta-A (373 aa).

Residues 1 to 18 (MPSSMSGYIPSYLDKDEL) are modulating. 2 consecutive NR C4-type zinc fingers follow at residues 19–39 (CVVC…CEGC) and 57–81 (CKYE…FKKC). Positions 19–93 (CVVCGDKATG…VGMATDLVLD (75 aa)) form a DNA-binding region, nuclear receptor. The NR LBD domain maps to 129-373 (EEWELIQVVT…PPLFLEVFED (245 aa)).

This sequence belongs to the nuclear hormone receptor family. NR1 subfamily.

It localises to the nucleus. Functionally, high affinity receptor for triiodothyronine (T3). The sequence is that of Thyroid hormone receptor beta-A (thrb-a) from Xenopus laevis (African clawed frog).